We begin with the raw amino-acid sequence, 153 residues long: Ribosomal RNA large subunit methyltransferase H (153 aa).

Positions 71 and 102 each coordinate S-adenosyl-L-methionine.

The protein belongs to the RNA methyltransferase RlmH family. As to quaternary structure, homodimer.

It localises to the cytoplasm. It catalyses the reaction pseudouridine(1915) in 23S rRNA + S-adenosyl-L-methionine = N(3)-methylpseudouridine(1915) in 23S rRNA + S-adenosyl-L-homocysteine + H(+). Functionally, specifically methylates the pseudouridine at position 1915 (m3Psi1915) in 23S rRNA. The chain is Ribosomal RNA large subunit methyltransferase H from Anaeromyxobacter dehalogenans (strain 2CP-C).